We begin with the raw amino-acid sequence, 760 residues long: Transmembrane channel-like protein 1 (760 aa).

The segment at 1–80 is disordered; the sequence is MSPKKVQIKV…RRRRLKRGAE (80 aa). Topologically, residues 1-182 are cytoplasmic; the sequence is MSPKKVQIKV…KIKAIESQFG (182 aa). Over residues 13–29 the composition is skewed to acidic residues; that stretch reads KEDETEESSSEEEEEVE. Over residues 30 to 39 the composition is skewed to basic and acidic residues; it reads DKLPRRESLR. A Phosphoserine modification is found at serine 37. At threonine 45 the chain carries Phosphothreonine. Acidic residues predominate over residues 50 to 61; the sequence is NEDDPEPEPEDE. Serine 128 is modified (phosphoserine). The helical transmembrane segment at 183 to 220 threads the bilayer; it reads SSVASYFLFLRWMYGVNMVLFILTFSLIMLPEYLWGLP. Topologically, residues 221–271 are extracellular; sequence YGSLPRKTVPRAEEASAANFGVLYDFNGLAQYSVLFYGYYDNKRTIGWMNF. Residues 272–303 traverse the membrane as a helical segment; sequence RLPLSYFLVGIMCIGYSFLVVLKAMTKNIGDD. At 304 to 359 the chain is on the cytoplasmic side; the sequence is GGGDDNTFNFSWKVFTSWDYLIGNPETADNKFNSITMNFKEAITEEKAAQVEENVH. A Phosphoserine modification is found at serine 314. Residues 360 to 390 form a helical membrane-spanning segment; the sequence is LIRFLRFLANFFVFLTLGGSGYLIFWAVKRS. At 391-402 the chain is on the extracellular side; the sequence is QEFAQQDPDTLG. Position 400 is a phosphothreonine (threonine 400). A helical membrane pass occupies residues 403 to 430; it reads WWEKNEMNMVMSLLGMFCPTLFDLFAEL. The Cytoplasmic portion of the chain corresponds to 431 to 434; it reads EDYH. Residues 435-469 traverse the membrane as a helical segment; it reads PLIALKWLLGRIFALLLGNLYVFILALMDEINNKI. Over 470-515 the chain is Extracellular; sequence EEEKLVKANITLWEANMIKAYNASFSENSTGPPFFVHPADVPRGPC. A helical transmembrane segment spans residues 516 to 553; sequence WETMVGQEFVRLTVSDVLTTYVTILIGDFLRACFVRFC. Residues 554–572 are Cytoplasmic-facing; the sequence is NYCWCWDLEYGYPSYTEFD. Residues 573 to 593 traverse the membrane as a helical segment; that stretch reads ISGNVLALIFNQGMIWMGSFF. Topologically, residues 594 to 596 are extracellular; it reads APS. Residues 597–619 traverse the membrane as a helical segment; it reads LPGINILRLHTSMYFQCWAVMCC. Topologically, residues 620–633 are cytoplasmic; that stretch reads NVPEARVFKASRSN. A helical membrane pass occupies residues 634–657; that stretch reads NFYLGMLLLILFLSTMPVLYMIVS. At 658 to 700 the chain is on the extracellular side; the sequence is LPPSFDCGPFSGKNRMFEVIGETLEHDFPSWMAKILRQLSNPG. A helical transmembrane segment spans residues 701–734; that stretch reads LVIAVILVMVLAIYYLNATAKGQKAANLDLKKKM. Residues 735–760 are Cytoplasmic-facing; sequence KMQALENKMRNKKMAAARAAAAAGRQ.

This sequence belongs to the TMC family. As to quaternary structure, forms the MET channel complosed of TMC dimer (TMC1 or TMC2), TMIE, TOMT, CIB (CIB2 or CIB3), LHFPL5 and PDH15. The interaction of TMC1 and TMC2 with TOMT is required for the transportation of TMC1/2 into the stereocilia of hair cells. Interacts (via N-terminus) with both isoforms CD1 and CD3 of PCDH15. Can form a heterodimer with TMC2, TMC5 or TMC7. Detected in fetal cochlea, and at low levels in placenta and testis.

It is found in the cell membrane. It catalyses the reaction Ca(2+)(in) = Ca(2+)(out). Pore-forming subunit of the mechanotransducer (MET) non-selective cation channel complex located at the tips of stereocilia of cochlear hair cells and that mediates sensory transduction in the auditory system. The MET complex is composed of two dimeric pore-forming ion-conducting transmembrane TMC (TMC1 or TMC2) subunits, and aided by several auxiliary proteins including LHFPL5, TMIE, CIB2/3 and TOMT, and the tip-link PCDH15. MET channel is activated by tension in the tip-link extending from the side wall of one stereocilium to the tip of the adjacent shorter stereocilium, where the channel is located. TMC1 MET channel is highly permeable to calcium and likely transports monovalent cations. Also involved in vestibular hair cells transduction current. This is Transmembrane channel-like protein 1 from Homo sapiens (Human).